The sequence spans 121 residues: uncharacterized protein (121 aa).

Positions 47-101 (SEVPHYHAEHDLTFTVLKGKGELYLEGEKKKLKEGDWAFIPKGAVHFYRNTSELS) constitute a Cupin type-2 domain.

This is an uncharacterized protein from Aquifex aeolicus (strain VF5).